Here is a 452-residue protein sequence, read N- to C-terminus: MLINDTVVAPATNISTQAIALIRVSGSEAFLIVNKLIKDKKLEEKRGLFLRKLYFEDELIDEVVLSCFVAPNSFTGENVVEIACHGGILNTNKIINILIQSGARMALRGEFSQRSFLNGKIDLIQAEGINNLIHAKNELALKIGVANMSGSNNKAIIELKDNLLDIISRIQVSIDYPDYDDVEGSSIEDLTNLLEIINDQINKLLMRSKMAFKNSEGIKTAIIGQTNVGKSSILNALINEDKAIVTDIPGTTRDIVEGQINLENVSLNLIDTAGIRKTSDVVENLGILKSKNLINEADLVLFVVNKENINDLDNQEIFELLKNKTYILIVNKAEKLSKTEKQNLEKKYQNIVFTSAINHDIDQLVLRINQMYLNEEINKNDELILIGLNQITLVEQIKNKLSTALSIIKSGMPIDIVNVDLYDAWNLLNELIGVEYEDEIIDNIFRKYCLGK.

(6S)-5-formyl-5,6,7,8-tetrahydrofolate contacts are provided by Arg-23, Glu-81, and Lys-120. The TrmE-type G domain occupies 217–373 (GIKTAIIGQT…LVLRINQMYL (157 aa)). Asn-227 is a K(+) binding site. GTP-binding positions include 227–232 (NVGKSS), 246–252 (TDIPGTT), and 271–274 (DTAG). Ser-231 provides a ligand contact to Mg(2+). Positions 246, 248, and 251 each coordinate K(+). Thr-252 serves as a coordination point for Mg(2+). Lys-452 provides a ligand contact to (6S)-5-formyl-5,6,7,8-tetrahydrofolate.

The protein belongs to the TRAFAC class TrmE-Era-EngA-EngB-Septin-like GTPase superfamily. TrmE GTPase family. As to quaternary structure, homodimer. Heterotetramer of two MnmE and two MnmG subunits. K(+) serves as cofactor.

It is found in the cytoplasm. In terms of biological role, exhibits a very high intrinsic GTPase hydrolysis rate. Involved in the addition of a carboxymethylaminomethyl (cmnm) group at the wobble position (U34) of certain tRNAs, forming tRNA-cmnm(5)s(2)U34. The chain is tRNA modification GTPase MnmE from Mycoplasma mycoides subsp. mycoides SC (strain CCUG 32753 / NCTC 10114 / PG1).